A 418-amino-acid chain; its full sequence is Tyrosine--tRNA ligase (418 aa).

Tyr-34 contacts L-tyrosine. The 'HIGH' region signature appears at 39–48 (PTADSLHLGH). Residues Tyr-169 and Gln-173 each contribute to the L-tyrosine site. Residues 229–233 (KFGKS) carry the 'KMSKS' region motif. Lys-232 contacts ATP. Residues 352-418 (LNIVELLVNA…GKKKNFVLTY (67 aa)) enclose the S4 RNA-binding domain.

It belongs to the class-I aminoacyl-tRNA synthetase family. TyrS type 1 subfamily. In terms of assembly, homodimer.

The protein localises to the cytoplasm. It catalyses the reaction tRNA(Tyr) + L-tyrosine + ATP = L-tyrosyl-tRNA(Tyr) + AMP + diphosphate + H(+). Functionally, catalyzes the attachment of tyrosine to tRNA(Tyr) in a two-step reaction: tyrosine is first activated by ATP to form Tyr-AMP and then transferred to the acceptor end of tRNA(Tyr). In Streptococcus thermophilus (strain ATCC BAA-491 / LMD-9), this protein is Tyrosine--tRNA ligase.